A 519-amino-acid polypeptide reads, in one-letter code: Cilia- and flagella-associated protein 53 (519 aa).

Coiled coils occupy residues 80–107 and 210–339; these read NRHLQDALDQYQMGIDEKRERLRELLES and LAKE…QEEQ. The interval 498-519 is disordered; it reads TTAVHPFRRRDRRCSSSGGQMS.

Belongs to the CFAP53 family.

Its subcellular location is the cytoplasm. It localises to the cytoskeleton. The protein localises to the cilium axoneme. It is found in the cilium basal body. Microtubule inner protein (MIP) part of the dynein-decorated doublet microtubules (DMTs) in cilia axoneme, which is required for motile cilia beating. Regulates motility patterns of both 9+0 and 9+2 motile cilia through differential localization and recruitment of axonemal dynein components. Required for cilium motility within the spinal canal and Kuppfer's vesicle and is involved in the establishment of left-right symmetry during embryogenesis. This Danio rerio (Zebrafish) protein is Cilia- and flagella-associated protein 53.